The primary structure comprises 537 residues: Quadr-hydrophobin (537 aa).

Residues 1 to 17 (MKFITVAAALFASTSLA) form the signal peptide. Hydrophobin stretches follow at residues 63 to 199 (GGNP…QNPI), 200 to 299 (GGNP…ENPT), 300 to 421 (GGNP…QDPL), and 422 to 537 (GGNP…RAII). Residues asparagine 70 and asparagine 113 are each glycosylated (N-linked (GlcNAc...) asparagine). 16 cysteine pairs are disulfide-bonded: cysteine 134-cysteine 183, cysteine 144-cysteine 174, cysteine 145-cysteine 157, cysteine 184-cysteine 195, cysteine 234-cysteine 283, cysteine 244-cysteine 274, cysteine 245-cysteine 257, cysteine 284-cysteine 295, cysteine 356-cysteine 405, cysteine 366-cysteine 396, cysteine 367-cysteine 379, cysteine 406-cysteine 417, cysteine 471-cysteine 520, cysteine 481-cysteine 511, cysteine 482-cysteine 494, and cysteine 521-cysteine 532.

Belongs to the cerato-ulmin hydrophobin family. As to quaternary structure, homotetramer. Further self-assembles to form highly ordered films at water-air interfaces through intermolecular interactions.

The protein resides in the secreted. Its subcellular location is the cell wall. Aerial growth, conidiation, and dispersal of filamentous fungi in the environment rely upon a capability of their secreting small amphipathic proteins called hydrophobins (HPBs) with low sequence identity. Class I can self-assemble into an outermost layer of rodlet bundles on aerial cell surfaces, conferring cellular hydrophobicity that supports fungal growth, development and dispersal; whereas Class II form highly ordered films at water-air interfaces through intermolecular interactions but contribute nothing to the rodlet structure. The protein is Quadr-hydrophobin of Cordyceps militaris (Caterpillar fungus).